The chain runs to 270 residues: Regulatory protein RecX (270 aa).

This sequence belongs to the RecX family.

Its subcellular location is the cytoplasm. Its function is as follows. Modulates RecA activity. The protein is Regulatory protein RecX of Bacillus cereus (strain AH187).